We begin with the raw amino-acid sequence, 137 residues long: Nucleoside diphosphate kinase (137 aa).

Positions 9, 57, 85, 91, 102, and 112 each coordinate ATP. Residue H115 is the Pros-phosphohistidine intermediate of the active site.

This sequence belongs to the NDK family. In terms of assembly, homotetramer. Requires Mg(2+) as cofactor.

The protein resides in the cytoplasm. The catalysed reaction is a 2'-deoxyribonucleoside 5'-diphosphate + ATP = a 2'-deoxyribonucleoside 5'-triphosphate + ADP. It catalyses the reaction a ribonucleoside 5'-diphosphate + ATP = a ribonucleoside 5'-triphosphate + ADP. Major role in the synthesis of nucleoside triphosphates other than ATP. The ATP gamma phosphate is transferred to the NDP beta phosphate via a ping-pong mechanism, using a phosphorylated active-site intermediate. This Campylobacter concisus (strain 13826) protein is Nucleoside diphosphate kinase.